Here is a 491-residue protein sequence, read N- to C-terminus: Homeobox protein unplugged (491 aa).

Disordered stretches follow at residues 1–23, 46–69, 124–146, and 227–329; these read MERP…TKTT, SASA…QEQE, AGKE…PLPH, and FSPA…RRTA. Over residues 254–264 the composition is skewed to polar residues; that stretch reads GDSSSDISLTL. Residues 305–316 show a composition bias toward gly residues; that stretch reads GLGGKDSQGNGS. Positions 323-382 form a DNA-binding region, homeobox; sequence SRRRRTAFTSEQLLELEREFHAKKYLSLTERSQIATSLKLSEVQVKIWFQNRRAKWKRVK.

It localises to the nucleus. Plays a regulatory role in neural branching of the tracheae: segment-specific aspects of these neural branching patterns appear to be generated by homeotic regulation of expression. The sequence is that of Homeobox protein unplugged from Drosophila pseudoobscura pseudoobscura (Fruit fly).